Consider the following 469-residue polypeptide: Glutamate--tRNA ligase (469 aa).

Residues 11–21 (PSPTGFIHLGN) carry the 'HIGH' region motif. A 'KMSKS' region motif is present at residues 243 to 247 (KMSKR). An ATP-binding site is contributed by Lys246.

The protein belongs to the class-I aminoacyl-tRNA synthetase family. Glutamate--tRNA ligase type 1 subfamily. Monomer.

Its subcellular location is the cytoplasm. It catalyses the reaction tRNA(Glu) + L-glutamate + ATP = L-glutamyl-tRNA(Glu) + AMP + diphosphate. Functionally, catalyzes the attachment of glutamate to tRNA(Glu) in a two-step reaction: glutamate is first activated by ATP to form Glu-AMP and then transferred to the acceptor end of tRNA(Glu). The polypeptide is Glutamate--tRNA ligase (Burkholderia cenocepacia (strain HI2424)).